The following is a 428-amino-acid chain: Chaperone SurA (428 aa).

Positions Met1 to Ala20 are cleaved as a signal peptide. 2 PpiC domains span residues Ser171–Asp272 and Val282–Asp382.

Its subcellular location is the periplasm. The catalysed reaction is [protein]-peptidylproline (omega=180) = [protein]-peptidylproline (omega=0). Its function is as follows. Chaperone involved in the correct folding and assembly of outer membrane proteins. Recognizes specific patterns of aromatic residues and the orientation of their side chains, which are found more frequently in integral outer membrane proteins. May act in both early periplasmic and late outer membrane-associated steps of protein maturation. This chain is Chaperone SurA, found in Salmonella paratyphi A (strain ATCC 9150 / SARB42).